The following is a 1062-amino-acid chain: MILENSDKLKDWLSVVLEPLCDADSSALARYVIALLKKDKSDKDLKRIMIEQLDVFLSEETTRFVERLFDAIASEEYLTVPAAPLITASSASTAELTVDQELALVIDGPQDDIEAVLVADSPPPPPKDNVIKPDSNQVKLEQASQDAREAEALAFISQEAGIAMHVPTDAKPAFDHKTKDSHNQQSASNYQHHHVRSASPPGRSSGVSGSGGGGPGGAGLAAGYADKENQPRDSRRRRASLRSRSRSRSRSNERAFRRSRSRDRRVNEREKTQRQFRNKSPPGSQTDNRHHGRRNFDRRRIGGNADDRPRFGNNKSRRSHSRSMSPERNARRNQNSPDRVQTAQANLIPAPVAPPAPVEHPASHPRQRCRDFDEKGYCVRGETCPWDHGVNPVVFEGINNTSLMMSMREYNPDAPEIWARSGGPPPGAGQGPVPPPTQPGQTTINPFSGNVRPTTLMSGSGPSPMGVPNPADYARNPGAPPQAAMMPFPFNPTAVTTPLQRQLIPIPVVDGAPTGGVAEVGKRRFELEDTVAIADVPTKRKVPINSRLGPRVNPNMQQHNSSLELRKVPRGLNTIAHLNNHFAKFGKIVNIQVSYEGDPEAAIVTFSTHAEANVAYRSTEAVLNNRFIKVFWHNDSSGADVGQMNQMGGGGGGGGRKNASQYHLHNVPAVPTPNADGAKISNANPLTEAGAGNIGTPATEQANTAAPASMRLKLNTTTAGGSAGGAAGAGAPGSGRPLNPAANAASIRKKQEEQQKAVHQLANGLRKRKQELLQSYMKQMKTALELVERMDQQDPQRAPTLQTIKVLQMTIDKLRKEIKADQDQLQAQMQQQQQQQQPPVKKTKEQQKKELLDMELELIAQQQEGNDTTAIQKRLEELQRNLGVGSAANNKSTHYAPASGAPGGGAGRKRPNLPEGPTRVDRRPKAIVVTGFAAEEADFVLGHFKNFGEISKHDVDREIPQLILSYATRLNAEQAVLRGKMYKDKRLQISWAPVVTPAPAPMAAPVEKSAAPGDMSVSLENPKQLIQSVSESESLLGSDTLPELRLEDEEEDEESEDRSWRR.

Positions D7–E75 constitute a PWI domain. 2 disordered regions span residues A119 to Q145 and K171 to V340. Residues D134 to Q145 show a composition bias toward polar residues. Over residues P172–H182 the composition is skewed to basic and acidic residues. Residues S197–V207 are compositionally biased toward low complexity. A compositionally biased stretch (gly residues) spans S208–L220. The span at S234–S249 shows a compositional bias: basic residues. 2 stretches are compositionally biased toward basic and acidic residues: residues R264–Q273 and R294–R310. The segment covering R322–V340 has biased composition (polar residues). Residues S363 to N391 form a C3H1-type zinc finger. Positions E416–S463 are disordered. The span at G423 to Q438 shows a compositional bias: pro residues. Over residues I444–G461 the composition is skewed to polar residues. The region spanning S561–D635 is the RRM domain. Disordered stretches follow at residues N666–T704, T716–A741, Q822–Q847, S886–V920, and A1004–R1062. Residues G721–G733 show a composition bias toward gly residues. Low complexity predominate over residues D823–V840. Polar residues predominate over residues S1018 to G1037. Over residues L1046–E1056 the composition is skewed to acidic residues.

It is found in the nucleus. Negatively regulates Hedgehog (hh) protein signal in wing development. Regulates neural-specific glycosylation by binding to FucTA mRNA and facilitating its nuclear export in neural cells. This is Zinc finger protein swm from Drosophila melanogaster (Fruit fly).